Here is a 233-residue protein sequence, read N- to C-terminus: Protein DOUBLE-STRAND BREAK FORMATION (233 aa).

As to quaternary structure, interacts with PRD1; this interaction facilitates a binding to PRD3. In terms of tissue distribution, specifically expressed in buds.

Required for meiotic double-strand break (DSB) formation, the initial event for meiotic recombination. In Arabidopsis thaliana (Mouse-ear cress), this protein is Protein DOUBLE-STRAND BREAK FORMATION.